The chain runs to 500 residues: Catalase (500 aa).

Active-site residues include H59 and N131. Y339 contacts heme.

Belongs to the catalase family. Heme is required as a cofactor.

It carries out the reaction 2 H2O2 = O2 + 2 H2O. Functionally, decomposes hydrogen peroxide into water and oxygen; serves to protect cells from the toxic effects of hydrogen peroxide. In Neisseria gonorrhoeae, this protein is Catalase (katA).